A 242-amino-acid polypeptide reads, in one-letter code: Vacuole localized DSC protein 1 (242 aa).

2 helical membrane passes run 128–148 and 152–172; these read PYGFVIMLLIREFTCPVPTAF and LLLVLLDILLLFCQIVIINGS.

In terms of assembly, part of the vacuole-localized DSC E3 ligase complex composed of at least TUL1, DSC2, DSC3, UBX3, CDC48 and VLD1.

The protein localises to the vacuole membrane. In terms of biological role, component of the vacuole-localized DSC E3 ubiquitin ligase complex involved in the targeting of the complex to the vacuole membrane via the AP3 pathway to ubiquinate vacuolar membrane proteins. Competes with GLD1 to determine the subcellular localizations of the DSC complex. This Saccharomyces cerevisiae (strain ATCC 204508 / S288c) (Baker's yeast) protein is Vacuole localized DSC protein 1.